A 425-amino-acid polypeptide reads, in one-letter code: Enolase (425 aa).

(2R)-2-phosphoglycerate is bound at residue Gln163. The active-site Proton donor is Glu205. 3 residues coordinate Mg(2+): Asp242, Glu286, and Asp313. The (2R)-2-phosphoglycerate site is built by Lys338, Arg367, Ser368, and Lys389. Lys338 serves as the catalytic Proton acceptor.

It belongs to the enolase family. The cofactor is Mg(2+).

It localises to the cytoplasm. The protein localises to the secreted. It is found in the cell surface. It carries out the reaction (2R)-2-phosphoglycerate = phosphoenolpyruvate + H2O. It functions in the pathway carbohydrate degradation; glycolysis; pyruvate from D-glyceraldehyde 3-phosphate: step 4/5. In terms of biological role, catalyzes the reversible conversion of 2-phosphoglycerate (2-PG) into phosphoenolpyruvate (PEP). It is essential for the degradation of carbohydrates via glycolysis. The polypeptide is Enolase (Helicobacter hepaticus (strain ATCC 51449 / 3B1)).